The primary structure comprises 1155 residues: DNA-directed RNA polymerase subunit beta (1155 aa).

Belongs to the RNA polymerase beta chain family. The RNAP catalytic core consists of 2 alpha, 1 beta, 1 beta' and 1 omega subunit. When a sigma factor is associated with the core the holoenzyme is formed, which can initiate transcription.

The enzyme catalyses RNA(n) + a ribonucleoside 5'-triphosphate = RNA(n+1) + diphosphate. Its function is as follows. DNA-dependent RNA polymerase catalyzes the transcription of DNA into RNA using the four ribonucleoside triphosphates as substrates. This is DNA-directed RNA polymerase subunit beta from Thermobifida fusca (strain YX).